The following is a 486-amino-acid chain: 3-sulfolactaldehyde dehydrogenase (486 aa).

Residues 157–158 (WN), 181–184 (RPAS), and 234–235 (GS) contribute to the NADP(+) site. Glu256 (proton acceptor) is an active-site residue. Leu257 contributes to the NADP(+) binding site. The Nucleophile role is filled by Cys290. Glu387 is an NADP(+) binding site.

The protein belongs to the aldehyde dehydrogenase family.

The enzyme catalyses (2S)-3-sulfolactaldehyde + NADP(+) + H2O = (2S)-3-sulfolactate + NADPH + 2 H(+). The catalysed reaction is (2S)-3-sulfolactaldehyde + NAD(+) + H2O = (2S)-3-sulfolactate + NADH + 2 H(+). In terms of biological role, catalyzes the oxidation of (2S)-3-sulfolactaldehyde to (2S)-3-sulfolactate, using both NAD(+) and NADP(+) as electron acceptors. Is involved in a degradation pathway of sulfoquinovose (SQ) that allows P.putida SQ1 to use SQ as the sole carbon and energy source for growth. The protein is 3-sulfolactaldehyde dehydrogenase of Pseudomonas putida (Arthrobacter siderocapsulatus).